We begin with the raw amino-acid sequence, 325 residues long: Necdin (325 aa).

Disordered stretches follow at residues 1 to 69 (MSEQ…IEDV) and 77 to 96 (AAEE…IPAP). The MAGE domain occupies 102-301 (LVQKAHELMW…QAWPSRYREA (200 aa)).

As to quaternary structure, binds to the transactivation domains of E2F1 and p53. Binds also SV40 large T antigen and adenovirus E1A. Interacts with nucleobindin 1 and 2. As to expression, brain specific. Not detected in other tissues. Expressed in postmitotic neurons. In adult brain the highest expression is in hypothalamus. Highly expressed in thalamus and midbrain. Relatively low levels are in cerebral cortex, hippocampus, striatum, olfactory bulb, cerebellum, pons and spinal cord. Also detected in neurally differentiated embryonal carcinoma cells.

It localises to the cytoplasm. The protein resides in the nucleus. The protein localises to the nucleoplasm. Its subcellular location is the nucleus matrix. Functionally, growth suppressor that facilitates the entry of the cell into cell cycle arrest. Functionally similar to the retinoblastoma protein it binds to and represses the activity of cell-cycle-promoting proteins such as SV40 large T antigen, adenovirus E1A, and the transcription factor E2F. Necdin also interacts with p53 and works in an additive manner to inhibit cell growth. Also functions as a transcription factor and directly binds to specific guanosine-rich DNA sequences. The sequence is that of Necdin (Ndn) from Mus musculus (Mouse).